We begin with the raw amino-acid sequence, 49 residues long: Large ribosomal subunit protein bL33 (49 aa).

It belongs to the bacterial ribosomal protein bL33 family.

The protein is Large ribosomal subunit protein bL33 (rpmG) of Thermotoga maritima (strain ATCC 43589 / DSM 3109 / JCM 10099 / NBRC 100826 / MSB8).